Consider the following 492-residue polypeptide: MGSCCSCLDRDSVPHNHPTKFKVTNVDDEGVELGSGVMELTQSELVLHLHQQEAVRWPYLCLRRYGYDSNLFSFESGRRCQTGQGIFAFKCSRAEEIFNLLQDLMQCNSINVTEEPVIITRNSHPQELDLPRGSSQPTGYTVSSFSNGFPGCPGEGPRFSSAPRRPSTSSLRHPSPGEESTQTLIASDEQSHTYVNTPTGEEDRRSRHCLQPLPEGRVPFPPQTQVSDQRDPQVFLQPGQVKFVLGPTPARRQVMKCQSLCPSMQDPPLHNNNEGPSECPAQPKCTYENVSGGLQQGAGWRLSPEERGWSGLAHRRAALLHYENLPPLPPVWESQVQQLRGEAGDDGDSKDGLTPSSNGFPDGEEDETPLQKPTSTRASARSHSSFPVPLTRRRGSPRVFNFDFRRPGPEPPRQLNYIQVELKGWGTAHPKGPQNPSVSGAPGPTPHPARSSDSYAVIDLKKTVAMSNLQRALPRDDGTVRKTRHNSTDLPL.

Glycine 2 carries N-myristoyl glycine lipidation. Residues 13–115 enclose the IRS-type PTB domain; sequence VPHNHPTKFK…QCNSINVTEE (103 aa). Disordered regions lie at residues 125–205, 337–413, and 425–492; these read PQEL…EDRR, QQLR…EPPR, and WGTA…DLPL. Composition is skewed to polar residues over residues 133–147 and 166–185; these read GSSQPTGYTVSSFSN and PSTSSLRHPSPGEESTQTLI. Residues 374 to 385 show a composition bias toward low complexity; the sequence is TSTRASARSHSS.

As to quaternary structure, binds NTRK1, FGFR1, NGFR, GRB2, PTPN11 and ERK2. Post-translationally, phosphorylated on tyrosine residues upon stimulation by BFGF or NGFB.

It is found in the membrane. Adapter protein that links FGF and NGF receptors to downstream signaling pathways. Involved in the activation of MAP kinases. Down-regulates ERK2 signaling by interfering with the phosphorylation and nuclear translocation of ERK2. In Rattus norvegicus (Rat), this protein is Fibroblast growth factor receptor substrate 3 (Frs3).